Reading from the N-terminus, the 72-residue chain is Translation initiation factor IF-1 (72 aa).

Positions M1 to K72 constitute an S1-like domain.

It belongs to the IF-1 family. Component of the 30S ribosomal translation pre-initiation complex which assembles on the 30S ribosome in the order IF-2 and IF-3, IF-1 and N-formylmethionyl-tRNA(fMet); mRNA recruitment can occur at any time during PIC assembly.

The protein localises to the cytoplasm. Its function is as follows. One of the essential components for the initiation of protein synthesis. Stabilizes the binding of IF-2 and IF-3 on the 30S subunit to which N-formylmethionyl-tRNA(fMet) subsequently binds. Helps modulate mRNA selection, yielding the 30S pre-initiation complex (PIC). Upon addition of the 50S ribosomal subunit IF-1, IF-2 and IF-3 are released leaving the mature 70S translation initiation complex. The polypeptide is Translation initiation factor IF-1 (Hyphomonas neptunium (strain ATCC 15444)).